The primary structure comprises 215 residues: Chaperone protein TorD (215 aa).

The protein belongs to the TorD/DmsD family. TorD subfamily.

It localises to the cytoplasm. Its function is as follows. Involved in the biogenesis of TorA. Acts on TorA before the insertion of the molybdenum cofactor and, as a result, probably favors a conformation of the apoenzyme that is competent for acquiring the cofactor. The polypeptide is Chaperone protein TorD (Vibrio atlanticus (strain LGP32) (Vibrio splendidus (strain Mel32))).